Here is a 61-residue protein sequence, read N- to C-terminus: Probable tautomerase SMU_1087 (61 aa).

The Proton acceptor; via imino nitrogen role is filled by Pro-2.

Belongs to the 4-oxalocrotonate tautomerase family.

The protein is Probable tautomerase SMU_1087 of Streptococcus mutans serotype c (strain ATCC 700610 / UA159).